The primary structure comprises 475 residues: Ribulose bisphosphate carboxylase large chain (475 aa).

Residues 1–2 constitute a propeptide that is removed on maturation; the sequence is MS. An N-acetylproline modification is found at Pro-3. Lys-14 carries the N6,N6,N6-trimethyllysine modification. Residues Asn-123 and Thr-173 each coordinate substrate. Lys-175 serves as the catalytic Proton acceptor. Substrate is bound at residue Lys-177. Lys-201, Asp-203, and Glu-204 together coordinate Mg(2+). Position 201 is an N6-carboxylysine (Lys-201). His-294 acts as the Proton acceptor in catalysis. Substrate is bound by residues Arg-295, His-327, and Ser-379.

It belongs to the RuBisCO large chain family. Type I subfamily. As to quaternary structure, heterohexadecamer of 8 large chains and 8 small chains. The cofactor is Mg(2+).

It localises to the plastid. The protein resides in the chloroplast. The enzyme catalyses 2 (2R)-3-phosphoglycerate + 2 H(+) = D-ribulose 1,5-bisphosphate + CO2 + H2O. It carries out the reaction D-ribulose 1,5-bisphosphate + O2 = 2-phosphoglycolate + (2R)-3-phosphoglycerate + 2 H(+). Its function is as follows. RuBisCO catalyzes two reactions: the carboxylation of D-ribulose 1,5-bisphosphate, the primary event in carbon dioxide fixation, as well as the oxidative fragmentation of the pentose substrate in the photorespiration process. Both reactions occur simultaneously and in competition at the same active site. This is Ribulose bisphosphate carboxylase large chain from Huperzia lucidula (Shining clubmoss).